Consider the following 360-residue polypeptide: Phospho-N-acetylmuramoyl-pentapeptide-transferase (360 aa).

The next 10 membrane-spanning stretches (helical) occupy residues 27 to 47, 73 to 93, 94 to 114, 132 to 152, 168 to 188, 199 to 219, 236 to 256, 263 to 283, 288 to 308, and 338 to 358; these read IVSLLTALVISLWMGPHMIAW, TMGGVMILVAIIVSVLMWANL, SNPYVWCVLLVLAGYGAVGFV, WKYFWQSVIALVVAFTMYSIG, VMPQLGLLYVALAYFVIVGTS, GLAIMPTVFVAAGFALVAWAT, ASELVIVCTAIVGAGLGFLWF, VFMGDVGSLALGGALGTIAVL, FLLVIMGGVFVVETLSVILQV, and VIVRFWIISLMLVLIGLATLK.

This sequence belongs to the glycosyltransferase 4 family. MraY subfamily. Requires Mg(2+) as cofactor.

Its subcellular location is the cell inner membrane. It carries out the reaction UDP-N-acetyl-alpha-D-muramoyl-L-alanyl-gamma-D-glutamyl-meso-2,6-diaminopimeloyl-D-alanyl-D-alanine + di-trans,octa-cis-undecaprenyl phosphate = di-trans,octa-cis-undecaprenyl diphospho-N-acetyl-alpha-D-muramoyl-L-alanyl-D-glutamyl-meso-2,6-diaminopimeloyl-D-alanyl-D-alanine + UMP. It participates in cell wall biogenesis; peptidoglycan biosynthesis. Catalyzes the initial step of the lipid cycle reactions in the biosynthesis of the cell wall peptidoglycan: transfers peptidoglycan precursor phospho-MurNAc-pentapeptide from UDP-MurNAc-pentapeptide onto the lipid carrier undecaprenyl phosphate, yielding undecaprenyl-pyrophosphoryl-MurNAc-pentapeptide, known as lipid I. The sequence is that of Phospho-N-acetylmuramoyl-pentapeptide-transferase from Pectobacterium atrosepticum (strain SCRI 1043 / ATCC BAA-672) (Erwinia carotovora subsp. atroseptica).